The chain runs to 513 residues: ATP synthase subunit alpha (513 aa).

ATP is bound at residue 169 to 176 (GDRQTGKT).

Belongs to the ATPase alpha/beta chains family. In terms of assembly, F-type ATPases have 2 components, CF(1) - the catalytic core - and CF(0) - the membrane proton channel. CF(1) has five subunits: alpha(3), beta(3), gamma(1), delta(1), epsilon(1). CF(0) has three main subunits: a(1), b(2) and c(9-12). The alpha and beta chains form an alternating ring which encloses part of the gamma chain. CF(1) is attached to CF(0) by a central stalk formed by the gamma and epsilon chains, while a peripheral stalk is formed by the delta and b chains.

The protein localises to the cell inner membrane. The enzyme catalyses ATP + H2O + 4 H(+)(in) = ADP + phosphate + 5 H(+)(out). In terms of biological role, produces ATP from ADP in the presence of a proton gradient across the membrane. The alpha chain is a regulatory subunit. This chain is ATP synthase subunit alpha, found in Tolumonas auensis (strain DSM 9187 / NBRC 110442 / TA 4).